We begin with the raw amino-acid sequence, 240 residues long: 4-hydroxy-tetrahydrodipicolinate reductase (240 aa).

Residues 79 to 81 and 103 to 106 contribute to the NAD(+) site; these read ATT and SANM. H135 (proton donor/acceptor) is an active-site residue. H136 contacts (S)-2,3,4,5-tetrahydrodipicolinate. K139 acts as the Proton donor in catalysis. 145 to 146 serves as a coordination point for (S)-2,3,4,5-tetrahydrodipicolinate; it reads GT.

The protein belongs to the DapB family.

The protein localises to the cytoplasm. It carries out the reaction (S)-2,3,4,5-tetrahydrodipicolinate + NAD(+) + H2O = (2S,4S)-4-hydroxy-2,3,4,5-tetrahydrodipicolinate + NADH + H(+). The catalysed reaction is (S)-2,3,4,5-tetrahydrodipicolinate + NADP(+) + H2O = (2S,4S)-4-hydroxy-2,3,4,5-tetrahydrodipicolinate + NADPH + H(+). It functions in the pathway amino-acid biosynthesis; L-lysine biosynthesis via DAP pathway; (S)-tetrahydrodipicolinate from L-aspartate: step 4/4. In terms of biological role, catalyzes the conversion of 4-hydroxy-tetrahydrodipicolinate (HTPA) to tetrahydrodipicolinate. The protein is 4-hydroxy-tetrahydrodipicolinate reductase of Staphylococcus aureus (strain MSSA476).